We begin with the raw amino-acid sequence, 271 residues long: Formamidopyrimidine-DNA glycosylase (271 aa).

Residue proline 2 is the Schiff-base intermediate with DNA of the active site. Glutamate 3 (proton donor) is an active-site residue. The active-site Proton donor; for beta-elimination activity is lysine 58. Histidine 91, arginine 110, and arginine 152 together coordinate DNA. An FPG-type zinc finger spans residues 237-271 (SIYGKKGRPCPKCGSAIRMMRLGGRSTFFCPLCQK). Arginine 261 serves as the catalytic Proton donor; for delta-elimination activity.

It belongs to the FPG family. As to quaternary structure, monomer. Zn(2+) is required as a cofactor.

It catalyses the reaction Hydrolysis of DNA containing ring-opened 7-methylguanine residues, releasing 2,6-diamino-4-hydroxy-5-(N-methyl)formamidopyrimidine.. The enzyme catalyses 2'-deoxyribonucleotide-(2'-deoxyribose 5'-phosphate)-2'-deoxyribonucleotide-DNA = a 3'-end 2'-deoxyribonucleotide-(2,3-dehydro-2,3-deoxyribose 5'-phosphate)-DNA + a 5'-end 5'-phospho-2'-deoxyribonucleoside-DNA + H(+). Its function is as follows. Involved in base excision repair of DNA damaged by oxidation or by mutagenic agents. Acts as a DNA glycosylase that recognizes and removes damaged bases. Has a preference for oxidized purines, such as 7,8-dihydro-8-oxoguanine (8-oxoG). Has AP (apurinic/apyrimidinic) lyase activity and introduces nicks in the DNA strand. Cleaves the DNA backbone by beta-delta elimination to generate a single-strand break at the site of the removed base with both 3'- and 5'-phosphates. This Geotalea daltonii (strain DSM 22248 / JCM 15807 / FRC-32) (Geobacter daltonii) protein is Formamidopyrimidine-DNA glycosylase.